We begin with the raw amino-acid sequence, 200 residues long: MASKIETLKANLEAALGARVVSLTEAIGELTLVVKASDYLEVAKTLRDDPKLRFEQLIDLCGVDYQTFGDGAYDGPRFAAVSHLLSVTNNWRLRLRAFAPDDDLPIVASLVDIWTSANWYEREAFDLYGIVFEGHPDLRRILTDYGFIGHPFRKDFPVSGYVEMRYDPEEKRVVYQPVTIEPREITPRVIREDRYGGLKH.

The protein belongs to the complex I 30 kDa subunit family. NDH-1 is composed of 14 different subunits. Subunits NuoB, C, D, E, F, and G constitute the peripheral sector of the complex.

Its subcellular location is the cell inner membrane. The enzyme catalyses a quinone + NADH + 5 H(+)(in) = a quinol + NAD(+) + 4 H(+)(out). In terms of biological role, NDH-1 shuttles electrons from NADH, via FMN and iron-sulfur (Fe-S) centers, to quinones in the respiratory chain. The immediate electron acceptor for the enzyme in this species is believed to be ubiquinone. Couples the redox reaction to proton translocation (for every two electrons transferred, four hydrogen ions are translocated across the cytoplasmic membrane), and thus conserves the redox energy in a proton gradient. In Burkholderia cenocepacia (strain HI2424), this protein is NADH-quinone oxidoreductase subunit C.